Reading from the N-terminus, the 148-residue chain is Protein GLUTAMINE DUMPER 3 (148 aa).

Residues 1-24 are disordered; sequence MEGRQYYPPRENVEGNRTTMGGGP. Over 1 to 34 the chain is Extracellular; sequence MEGRQYYPPRENVEGNRTTMGGGPHSPWHSPVPY. A helical membrane pass occupies residues 35-55; sequence LFGGLAAMLGLIAFALLILAC. At 56-148 the chain is on the cytoplasmic side; that stretch reads SYWRLSGYLD…RSSESNGETH (93 aa). The short motif at 99–103 is the VIMAG element; sequence VIMAG. Residues 120-132 show a composition bias toward acidic residues; sequence CDDDDDEDDDVEG. The tract at residues 120 to 148 is disordered; it reads CDDDDDEDDDVEGSDQVVPRSSESNGETH. The span at 138–148 shows a compositional bias: polar residues; it reads PRSSESNGETH.

It belongs to the GLUTAMINE DUMPER 1 (TC 9.B.60) family. In terms of tissue distribution, expressed in the vascular tissues. Also detected in anthers.

The protein localises to the membrane. Functionally, probable subunit of an amino acid transporter involved in the regulation of the amino acid metabolism. Stimulates amino acid export by activating nonselective amino acid facilitators. Acts upstream genes involved in the salicylic acid (SA) pathway and in the geminivirus-host interaction. This chain is Protein GLUTAMINE DUMPER 3 (GDU3), found in Arabidopsis thaliana (Mouse-ear cress).